A 522-amino-acid chain; its full sequence is 2-isopropylmalate synthase (522 aa).

In terms of domain architecture, Pyruvate carboxyltransferase spans 5–267 (VIIFDTTLRD…ETGINAKEIH (263 aa)). D14, H202, H204, and N238 together coordinate Mn(2+). The tract at residues 392 to 522 (QLQQLVVQSD…MQKNRELGGV (131 aa)) is regulatory domain.

Belongs to the alpha-IPM synthase/homocitrate synthase family. LeuA type 1 subfamily. As to quaternary structure, homodimer. Requires Mn(2+) as cofactor.

It localises to the cytoplasm. It catalyses the reaction 3-methyl-2-oxobutanoate + acetyl-CoA + H2O = (2S)-2-isopropylmalate + CoA + H(+). It functions in the pathway amino-acid biosynthesis; L-leucine biosynthesis; L-leucine from 3-methyl-2-oxobutanoate: step 1/4. Functionally, catalyzes the condensation of the acetyl group of acetyl-CoA with 3-methyl-2-oxobutanoate (2-ketoisovalerate) to form 3-carboxy-3-hydroxy-4-methylpentanoate (2-isopropylmalate). This is 2-isopropylmalate synthase from Shewanella baltica (strain OS223).